A 217-amino-acid polypeptide reads, in one-letter code: Coiled-coil domain-containing protein 124-A (217 aa).

Positions 1–128 are disordered; the sequence is MPKKFQGENT…HLEMPLEENV (128 aa). 3 stretches are compositionally biased toward basic and acidic residues: residues 18–45, 52–74, and 95–128; these read RKAE…DDKH, RKED…QRLL, and TRAE…EENV. Residues 46 to 82 adopt a coiled-coil conformation; it reads VARKGQRKEDKEKKRLEQLERKKESQRLLDEEDSKMK.

This sequence belongs to the CCDC124 family. Associates with translationally inactive ribosomes in the nonrotated state.

Its subcellular location is the cytoplasm. It localises to the cytoskeleton. It is found in the microtubule organizing center. The protein localises to the centrosome. The protein resides in the midbody. In terms of biological role, ribosome-binding protein involved in ribosome hibernation: associates with translationally inactive ribosomes and stabilizes the nonrotated conformation of the 80S ribosome, thereby promoting ribosome preservation and storage. The chain is Coiled-coil domain-containing protein 124-A (ccdc124-a) from Xenopus laevis (African clawed frog).